Here is a 713-residue protein sequence, read N- to C-terminus: Polyribonucleotide nucleotidyltransferase (713 aa).

Mg(2+) contacts are provided by D485 and D491. Positions P552–I611 constitute a KH domain. Positions G621–K689 constitute an S1 motif domain. The tract at residues D694–E713 is disordered. Positions N701–E713 are enriched in polar residues.

Belongs to the polyribonucleotide nucleotidyltransferase family. As to quaternary structure, component of the RNA degradosome, which is a multiprotein complex involved in RNA processing and mRNA degradation. It depends on Mg(2+) as a cofactor.

It localises to the cytoplasm. It carries out the reaction RNA(n+1) + phosphate = RNA(n) + a ribonucleoside 5'-diphosphate. Involved in mRNA degradation. Catalyzes the phosphorolysis of single-stranded polyribonucleotides processively in the 3'- to 5'-direction. The protein is Polyribonucleotide nucleotidyltransferase of Histophilus somni (strain 2336) (Haemophilus somnus).